The following is a 428-amino-acid chain: MMTYQEIFNEIKNKAYFKNHRHVLIAVSGGVDSMNLLHFLYLFQDKLKIRIGIAHVNHKQRSESDSEEAYLKCWAKKHDIPIYVSNFEGIFSEKAARDWRYAFFKSIMLKNNYSALVTAHHSDDQAETILMRLIRGSRLRYLSGIKSVQPFANGQLIRPFLTFSKKDLPEIFHFEDSSNRELSFLRNRVRNNYLPLLKQENPRFIQGLNQLALENSLLFQAFKELTNHITTTDLTEFNEQSKSIQYFLLQDYLEGFPDLDLKKSQFTQLLQIIQIAKQGYYYLKKDYYIFIDKFSFKITKIVPKTELVKDEKMLEYDSNLCYRDYYFSFMPKSNEDQGQVNIPLFSLSSIKLRSRQSGDYISFGHFSKKIRRLFIDEKFTIAERQNAIVGEQDGEIIFVLVGDKTYLRKACKHDIMLAKLYIDKLEKG.

28–33 serves as a coordination point for ATP; sequence SGGVDS.

It belongs to the tRNA(Ile)-lysidine synthase family.

The protein localises to the cytoplasm. The catalysed reaction is cytidine(34) in tRNA(Ile2) + L-lysine + ATP = lysidine(34) in tRNA(Ile2) + AMP + diphosphate + H(+). Its function is as follows. Ligates lysine onto the cytidine present at position 34 of the AUA codon-specific tRNA(Ile) that contains the anticodon CAU, in an ATP-dependent manner. Cytidine is converted to lysidine, thus changing the amino acid specificity of the tRNA from methionine to isoleucine. The protein is tRNA(Ile)-lysidine synthase of Streptococcus pyogenes serotype M18 (strain MGAS8232).